The sequence spans 323 residues: RING-H2 finger protein ATL32 (323 aa).

The signal sequence occupies residues 1–28 (MMTRVECFNPHRWIILHVAIIIQSKANA). Residues 47–67 (TTVFAVLVTLFFLTGLLSVYI) form a helical membrane-spanning segment. The RING-type; atypical zinc-finger motif lies at 124-166 (CAICLNELEDHETVRLLPICNHLFHIDCIDTWLYSHATCPVCR). Residues 210 to 229 (SSEISGKFPRSNSTGHSMDR) form a disordered region.

The protein belongs to the RING-type zinc finger family. ATL subfamily.

The protein localises to the membrane. The enzyme catalyses S-ubiquitinyl-[E2 ubiquitin-conjugating enzyme]-L-cysteine + [acceptor protein]-L-lysine = [E2 ubiquitin-conjugating enzyme]-L-cysteine + N(6)-ubiquitinyl-[acceptor protein]-L-lysine.. It functions in the pathway protein modification; protein ubiquitination. This Arabidopsis thaliana (Mouse-ear cress) protein is RING-H2 finger protein ATL32 (ATL32).